Consider the following 496-residue polypeptide: Xylulose kinase (496 aa).

83–84 provides a ligand contact to substrate; that stretch reads MH. Asp-237 serves as the catalytic Proton acceptor.

The protein belongs to the FGGY kinase family.

The enzyme catalyses D-xylulose + ATP = D-xylulose 5-phosphate + ADP + H(+). Its function is as follows. Catalyzes the phosphorylation of D-xylulose to D-xylulose 5-phosphate. The polypeptide is Xylulose kinase (Staphylococcus epidermidis (strain ATCC 35984 / DSM 28319 / BCRC 17069 / CCUG 31568 / BM 3577 / RP62A)).